Here is a 158-residue protein sequence, read N- to C-terminus: Cyclic pyranopterin monophosphate synthase (158 aa).

Substrate-binding positions include Leu-75–His-77 and Met-113–Glu-114. Residue Asp-128 is part of the active site.

This sequence belongs to the MoaC family. As to quaternary structure, homohexamer; trimer of dimers.

The enzyme catalyses (8S)-3',8-cyclo-7,8-dihydroguanosine 5'-triphosphate = cyclic pyranopterin phosphate + diphosphate. Its pathway is cofactor biosynthesis; molybdopterin biosynthesis. Functionally, catalyzes the conversion of (8S)-3',8-cyclo-7,8-dihydroguanosine 5'-triphosphate to cyclic pyranopterin monophosphate (cPMP). This Histophilus somni (strain 2336) (Haemophilus somnus) protein is Cyclic pyranopterin monophosphate synthase.